A 157-amino-acid polypeptide reads, in one-letter code: Heat shock 22 kDa protein, chloroplastic (157 aa).

One can recognise a sHSP domain in the interval 40-155; that stretch reads GKAGHTHAPM…KPEPKRIAVT (116 aa).

This sequence belongs to the small heat shock protein (HSP20) family.

The protein localises to the plastid. It is found in the chloroplast. The chain is Heat shock 22 kDa protein, chloroplastic from Chlamydomonas reinhardtii (Chlamydomonas smithii).